Reading from the N-terminus, the 198-residue chain is Probable GTP-binding protein EngB (198 aa).

Positions 22-195 (GHPEIAFLGR…WSWLEQTAGL (174 aa)) constitute an EngB-type G domain. GTP-binding positions include 30–37 (GRSNVGKS), 57–61 (GKTQT), 75–78 (DVPG), 142–145 (TKID), and 174–176 (FSA). Residues serine 37 and threonine 59 each coordinate Mg(2+).

It belongs to the TRAFAC class TrmE-Era-EngA-EngB-Septin-like GTPase superfamily. EngB GTPase family. It depends on Mg(2+) as a cofactor.

Functionally, necessary for normal cell division and for the maintenance of normal septation. This is Probable GTP-binding protein EngB from Lacticaseibacillus paracasei (strain ATCC 334 / BCRC 17002 / CCUG 31169 / CIP 107868 / KCTC 3260 / NRRL B-441) (Lactobacillus paracasei).